The chain runs to 355 residues: UDP-galactose translocator 1 (355 aa).

The segment at methionine 1–arginine 36 is disordered. The span at serine 9–glutamate 30 shows a compositional bias: basic and acidic residues. 6 helical membrane passes run valine 40 to isoleucine 60, tryptophan 177 to alanine 197, isoleucine 211 to phenylalanine 231, valine 282 to tyrosine 302, serine 309 to aspartate 329, and isoleucine 330 to tyrosine 350.

Belongs to the nucleotide-sugar transporter family. SLC35A subfamily.

Its subcellular location is the membrane. It is found in the cytoplasmic granule membrane. This Caenorhabditis elegans protein is UDP-galactose translocator 1 (ugtp-1).